The chain runs to 194 residues: UPF0301 protein BT_0659 (194 aa).

The protein belongs to the UPF0301 (AlgH) family.

This chain is UPF0301 protein BT_0659, found in Bartonella tribocorum (strain CIP 105476 / IBS 506).